Consider the following 259-residue polypeptide: Diphthine synthase (259 aa).

S-adenosyl-L-methionine is bound by residues leucine 9, aspartate 85, valine 88, 113–114 (TA), leucine 168, alanine 209, and histidine 234.

The protein belongs to the diphthine synthase family. Homodimer.

It carries out the reaction 2-[(3S)-amino-3-carboxypropyl]-L-histidyl-[translation elongation factor 2] + 3 S-adenosyl-L-methionine = diphthine-[translation elongation factor 2] + 3 S-adenosyl-L-homocysteine + 3 H(+). The protein operates within protein modification; peptidyl-diphthamide biosynthesis. In terms of biological role, S-adenosyl-L-methionine-dependent methyltransferase that catalyzes the trimethylation of the amino group of the modified target histidine residue in translation elongation factor 2 (EF-2), to form an intermediate called diphthine. The three successive methylation reactions represent the second step of diphthamide biosynthesis. The polypeptide is Diphthine synthase (Haloarcula marismortui (strain ATCC 43049 / DSM 3752 / JCM 8966 / VKM B-1809) (Halobacterium marismortui)).